Reading from the N-terminus, the 330-residue chain is Polyprenal reductase (330 aa).

Residues 1–19 (MASWVGTELSALNPLRTLW) are Cytoplasmic-facing. A helical transmembrane segment spans residues 20–40 (LALAAAFLLALLLQLAPAGLL). Topologically, residues 41 to 74 (PNCALFQDLIRYGKTKLSGPRRPAVCRAFDVPKR) are lumenal. Residues 75 to 95 (YFSHFYVVSVLWNGFLLWFLS) form a helical membrane-spanning segment. Residues 96–132 (RSLFLGAPFPNWLRALLRTLGSTQFRALEMESKASQM) lie on the Cytoplasmic side of the membrane. A helical membrane pass occupies residues 133 to 153 (LVGELALSAFLVLVFLWVHSV). The Lumenal portion of the chain corresponds to 154-168 (RRLFECFYISVFSNA). Residues 169–189 (VMHVVQYCFGLVYYVLVGLTV) traverse the membrane as a helical segment. Over 190 to 206 (LSQVPMDDKNVYMLGKN) the chain is Cytoplasmic. A helical membrane pass occupies residues 207-227 (LLLPARWFHVLGMMMFLWSSA). Topologically, residues 228 to 277 (HQYECHVILSNLRRNKKGAIVHCQHRIPFGDWFEYVSSANYLAELMIYIS) are lumenal. A helical membrane pass occupies residues 278 to 298 (MAVTFGFHNFTWWLVVAYVFF). The Cytoplasmic segment spans residues 299–330 (CQALSAFFNHKFYKSTFVSYPKHRKAFLPFLF).

The protein belongs to the steroid 5-alpha reductase family. Polyprenal reductase subfamily.

The protein localises to the endoplasmic reticulum membrane. It carries out the reaction a di-trans,poly-cis-dolichal + NADP(+) = a di-trans,poly-cis-polyprenal + NADPH + H(+). It catalyses the reaction a 3-oxo-5alpha-steroid + NADP(+) = a 3-oxo-Delta(4)-steroid + NADPH + H(+). The enzyme catalyses androst-4-ene-3,17-dione + NADPH + H(+) = 5alpha-androstan-3,17-dione + NADP(+). The catalysed reaction is 17beta-hydroxy-5alpha-androstan-3-one + NADP(+) = testosterone + NADPH + H(+). It functions in the pathway protein modification; protein glycosylation. Its function is as follows. Plays a key role in early steps of protein N-linked glycosylation by being involved in the conversion of polyprenol into dolichol. Acts as a polyprenal reductase that mediates the reduction of polyprenal into dolichal in a NADP-dependent mechanism. Dolichols are required for the synthesis of dolichol-linked monosaccharides and the oligosaccharide precursor used for N-glycosylation. Also able to convert testosterone (T) into 5-alpha-dihydrotestosterone (DHT). In Mesocricetus auratus (Golden hamster), this protein is Polyprenal reductase.